The sequence spans 253 residues: Phosphate import ATP-binding protein PstB (253 aa).

An ABC transporter domain is found at 7–248; sequence IEVEDLNVYF…PRDKRTEDYI (242 aa). ATP is bound at residue 39–46; that stretch reads GPSGCGKS.

This sequence belongs to the ABC transporter superfamily. Phosphate importer (TC 3.A.1.7) family. In terms of assembly, the complex is composed of two ATP-binding proteins (PstB), two transmembrane proteins (PstC and PstA) and a solute-binding protein (PstS).

It localises to the cell membrane. The catalysed reaction is phosphate(out) + ATP + H2O = ADP + 2 phosphate(in) + H(+). Functionally, part of the ABC transporter complex PstSACB involved in phosphate import. Responsible for energy coupling to the transport system. In Methanothermobacter thermautotrophicus (strain ATCC 29096 / DSM 1053 / JCM 10044 / NBRC 100330 / Delta H) (Methanobacterium thermoautotrophicum), this protein is Phosphate import ATP-binding protein PstB.